A 291-amino-acid polypeptide reads, in one-letter code: Tyrosine recombinase XerD (291 aa).

The 82-residue stretch at 1 to 82 (MEEGLIDRLL…ACKRLYIWME (82 aa)) folds into the Core-binding (CB) domain. Positions 103-285 (NIPTLITEQQ…ANVWLQGVVK (183 aa)) constitute a Tyr recombinase domain. Catalysis depends on residues Arg-143, Lys-167, His-237, Arg-240, and His-263. The active-site O-(3'-phospho-DNA)-tyrosine intermediate is Tyr-272.

This sequence belongs to the 'phage' integrase family. XerD subfamily. In terms of assembly, forms a cyclic heterotetrameric complex composed of two molecules of XerC and two molecules of XerD.

Its subcellular location is the cytoplasm. Functionally, site-specific tyrosine recombinase, which acts by catalyzing the cutting and rejoining of the recombining DNA molecules. The XerC-XerD complex is essential to convert dimers of the bacterial chromosome into monomers to permit their segregation at cell division. It also contributes to the segregational stability of plasmids. This chain is Tyrosine recombinase XerD, found in Neisseria meningitidis serogroup B (strain ATCC BAA-335 / MC58).